The primary structure comprises 282 residues: Probable endonuclease 4 (282 aa).

Zn(2+) is bound by residues His-69, His-109, Glu-144, Asp-178, His-181, His-215, Asp-228, His-230, and Glu-260.

The protein belongs to the AP endonuclease 2 family. It depends on Zn(2+) as a cofactor.

It catalyses the reaction Endonucleolytic cleavage to 5'-phosphooligonucleotide end-products.. Functionally, endonuclease IV plays a role in DNA repair. It cleaves phosphodiester bonds at apurinic or apyrimidinic (AP) sites, generating a 3'-hydroxyl group and a 5'-terminal sugar phosphate. This Thermosipho africanus (strain TCF52B) protein is Probable endonuclease 4.